The sequence spans 508 residues: ATP synthase subunit alpha (508 aa).

An ATP-binding site is contributed by 171 to 178; that stretch reads GDRQTGKT.

The protein belongs to the ATPase alpha/beta chains family. In terms of assembly, F-type ATPases have 2 components, CF(1) - the catalytic core - and CF(0) - the membrane proton channel. CF(1) has five subunits: alpha(3), beta(3), gamma(1), delta(1), epsilon(1). CF(0) has three main subunits: a(1), b(2) and c(9-12). The alpha and beta chains form an alternating ring which encloses part of the gamma chain. CF(1) is attached to CF(0) by a central stalk formed by the gamma and epsilon chains, while a peripheral stalk is formed by the delta and b chains.

The protein resides in the cell membrane. The catalysed reaction is ATP + H2O + 4 H(+)(in) = ADP + phosphate + 5 H(+)(out). In terms of biological role, produces ATP from ADP in the presence of a proton gradient across the membrane. The alpha chain is a regulatory subunit. This is ATP synthase subunit alpha from Protochlamydia amoebophila (strain UWE25).